A 217-amino-acid chain; its full sequence is Uracil-DNA glycosylase (217 aa).

Catalysis depends on Asp-62, which acts as the Proton acceptor.

Belongs to the uracil-DNA glycosylase (UDG) superfamily. UNG family.

The protein resides in the cytoplasm. The catalysed reaction is Hydrolyzes single-stranded DNA or mismatched double-stranded DNA and polynucleotides, releasing free uracil.. Functionally, excises uracil residues from the DNA which can arise as a result of misincorporation of dUMP residues by DNA polymerase or due to deamination of cytosine. In Streptococcus pyogenes serotype M4 (strain MGAS10750), this protein is Uracil-DNA glycosylase.